A 306-amino-acid chain; its full sequence is Ornithine carbamoyltransferase (306 aa).

Carbamoyl phosphate is bound by residues 53–56 (STRT), glutamine 80, arginine 104, and 131–134 (HPCQ). L-ornithine contacts are provided by residues asparagine 162, aspartate 219, and 223 to 224 (SM). Residues 259-260 (CL) and arginine 287 contribute to the carbamoyl phosphate site.

The protein belongs to the aspartate/ornithine carbamoyltransferase superfamily. OTCase family.

Its subcellular location is the cytoplasm. The enzyme catalyses carbamoyl phosphate + L-ornithine = L-citrulline + phosphate + H(+). It participates in amino-acid biosynthesis; L-arginine biosynthesis; L-arginine from L-ornithine and carbamoyl phosphate: step 1/3. In terms of biological role, reversibly catalyzes the transfer of the carbamoyl group from carbamoyl phosphate (CP) to the N(epsilon) atom of ornithine (ORN) to produce L-citrulline. In Psychrobacter sp. (strain PRwf-1), this protein is Ornithine carbamoyltransferase.